The sequence spans 382 residues: Sialidase (382 aa).

R37 contributes to the substrate binding site. C42 and C103 are disulfide-bonded. The active-site Proton acceptor is the D62. BNR repeat units lie at residues 71-82 (ARSTDGGKTWNK), 145-156 (YKSTDDGVTFSK), and 210-220 (IYSTDGITWSL). R246 provides a ligand contact to substrate. The stretch at 254–265 (FETKDFGKTWTE) is one BNR 4 repeat. Residue R309 coordinates substrate. Residue Y342 is the Nucleophile of the active site. Residue E361 is part of the active site.

The protein belongs to the glycosyl hydrolase 33 family. As to quaternary structure, monomer.

It catalyses the reaction Hydrolysis of alpha-(2-&gt;3)-, alpha-(2-&gt;6)-, alpha-(2-&gt;8)- glycosidic linkages of terminal sialic acid residues in oligosaccharides, glycoproteins, glycolipids, colominic acid and synthetic substrates.. In terms of biological role, cleaves the terminal sialic acid (N-acetyl neuraminic acid) from carbohydrate chains in glycoproteins providing free sialic acid which can be used as carbon and energy sources. Sialidases have been suggested to be pathogenic factors in microbial infections. This chain is Sialidase (nanH), found in Salmonella typhimurium (strain LT2 / SGSC1412 / ATCC 700720).